The sequence spans 558 residues: Formate--tetrahydrofolate ligase 2 (558 aa).

Residue 67–74 (TPAGEGKT) participates in ATP binding.

This sequence belongs to the formate--tetrahydrofolate ligase family.

It catalyses the reaction (6S)-5,6,7,8-tetrahydrofolate + formate + ATP = (6R)-10-formyltetrahydrofolate + ADP + phosphate. Its pathway is one-carbon metabolism; tetrahydrofolate interconversion. This Desulfitobacterium hafniense (strain Y51) protein is Formate--tetrahydrofolate ligase 2.